The sequence spans 438 residues: Glutamyl-tRNA(Gln) amidotransferase subunit D (438 aa).

In terms of domain architecture, Asparaginase/glutaminase spans 92–422 (PTITILGTGG…REAKKMMLTN (331 aa)). Residues T102, T178, D179, and K256 contribute to the active site.

This sequence belongs to the asparaginase 1 family. GatD subfamily. As to quaternary structure, heterodimer of GatD and GatE.

It carries out the reaction L-glutamyl-tRNA(Gln) + L-glutamine + ATP + H2O = L-glutaminyl-tRNA(Gln) + L-glutamate + ADP + phosphate + H(+). Allows the formation of correctly charged Gln-tRNA(Gln) through the transamidation of misacylated Glu-tRNA(Gln) in organisms which lack glutaminyl-tRNA synthetase. The reaction takes place in the presence of glutamine and ATP through an activated gamma-phospho-Glu-tRNA(Gln). The GatDE system is specific for glutamate and does not act on aspartate. The sequence is that of Glutamyl-tRNA(Gln) amidotransferase subunit D from Pyrococcus furiosus (strain ATCC 43587 / DSM 3638 / JCM 8422 / Vc1).